The chain runs to 239 residues: Probable transcriptional regulatory protein Aave_3203 (239 aa).

The segment at 1 to 20 (MAGHSKWANIQHRKGRQDEK) is disordered.

This sequence belongs to the TACO1 family.

The protein localises to the cytoplasm. This is Probable transcriptional regulatory protein Aave_3203 from Paracidovorax citrulli (strain AAC00-1) (Acidovorax citrulli).